A 33-amino-acid chain; its full sequence is ISILASLSTFQQMWISKQEYDESGPSIVHRKCF.

It belongs to the actin family.

It localises to the cytoplasm. The protein resides in the cytoskeleton. It carries out the reaction ATP + H2O = ADP + phosphate + H(+). Its function is as follows. Actins are highly conserved proteins that are involved in various types of cell motility and are ubiquitously expressed in all eukaryotic cells. The protein is Actin of Dictyocaulus viviparus (Bovine lungworm).